We begin with the raw amino-acid sequence, 220 residues long: UPF0711 protein C18orf21 (220 aa).

The interval 117–181 (SRSFVSTLKS…VSTCSSKNTS (65 aa)) is disordered. A compositionally biased stretch (polar residues) spans 119-136 (SFVSTLKSNPATPTSKLS). Phosphoserine is present on serine 126. Phosphothreonine occurs at positions 130 and 139. Over residues 171 to 180 (SVSTCSSKNT) the composition is skewed to low complexity.

It belongs to the UPF0711 family.

This is UPF0711 protein C18orf21 (C18orf21) from Homo sapiens (Human).